Here is a 490-residue protein sequence, read N- to C-terminus: Kinetochore protein Nuf2 homolog (490 aa).

Coiled-coil stretches lie at residues 146-280 (DRKF…KLEA) and 310-407 (DLID…SETI). 2 disordered regions span residues 346–365 (QSETHEQLRIEHTQKSEERQ) and 468–490 (IDAGENTENCDPQPNDSSFSVFK).

It belongs to the NUF2 family. As to quaternary structure, component of the NDC80 complex, which is composed of at least ndc-80 and him-10. The NDC80 complex interacts with knl-1.

The protein localises to the nucleus. Its subcellular location is the chromosome. It is found in the centromere. The protein resides in the kinetochore. Its function is as follows. Acts as a component of the essential kinetochore-associated NDC80 complex, which is required for chromosome segregation in mitosis and meiosis and spindle checkpoint activity. The ndc-80 complex synergistically enhances the affinity of the ska-1 complex for microtubules and may allow the ndc-80 complex to track depolymerizing microtubules. This Caenorhabditis elegans protein is Kinetochore protein Nuf2 homolog (him-10).